A 263-amino-acid polypeptide reads, in one-letter code: Endonuclease 8 (263 aa).

The active-site Schiff-base intermediate with DNA is P2. Catalysis depends on E3, which acts as the Proton donor. The active-site Proton donor; for beta-elimination activity is K53. Residues Q70, R125, and N169 each coordinate DNA. The segment at 229 to 263 adopts an FPG-type zinc-finger fold; the sequence is KVFHRDGELCERCGGIIEKTTLSSRPFYWCPGCQH. The active-site Proton donor; for delta-elimination activity is R253.

This sequence belongs to the FPG family. The cofactor is Zn(2+).

The enzyme catalyses 2'-deoxyribonucleotide-(2'-deoxyribose 5'-phosphate)-2'-deoxyribonucleotide-DNA = a 3'-end 2'-deoxyribonucleotide-(2,3-dehydro-2,3-deoxyribose 5'-phosphate)-DNA + a 5'-end 5'-phospho-2'-deoxyribonucleoside-DNA + H(+). Functionally, involved in base excision repair of DNA damaged by oxidation or by mutagenic agents. Acts as a DNA glycosylase that recognizes and removes damaged bases. Has a preference for oxidized pyrimidines, such as thymine glycol, 5,6-dihydrouracil and 5,6-dihydrothymine. Has AP (apurinic/apyrimidinic) lyase activity and introduces nicks in the DNA strand. Cleaves the DNA backbone by beta-delta elimination to generate a single-strand break at the site of the removed base with both 3'- and 5'-phosphates. In Shigella boydii serotype 4 (strain Sb227), this protein is Endonuclease 8.